Here is a 321-residue protein sequence, read N- to C-terminus: Fe-S cluster assembly protein DRE2 (321 aa).

The interval Met1–Arg161 is N-terminal SAM-like domain. Residues Pro123–Asn168 form a disordered region. The span at Pro139 to Thr156 shows a compositional bias: low complexity. Residues Pro162–Asp197 are linker. Cys203, Cys219, Cys222, and Cys224 together coordinate [2Fe-2S] cluster. The tract at residues Cys203 to Cys224 is fe-S binding site A. [4Fe-4S] cluster-binding residues include Cys285, Cys288, Cys296, and Cys299. 2 short sequence motifs (cx2C motif) span residues Cys285–Cys288 and Cys296–Cys299. A fe-S binding site B region spans residues Cys285 to Cys299.

Belongs to the anamorsin family. As to quaternary structure, monomer. Interacts with TAH18. Interacts with MIA40. Requires [2Fe-2S] cluster as cofactor. [4Fe-4S] cluster serves as cofactor.

The protein localises to the cytoplasm. It is found in the mitochondrion intermembrane space. Functionally, component of the cytosolic iron-sulfur (Fe-S) protein assembly (CIA) machinery required for the maturation of extramitochondrial Fe-S proteins. Part of an electron transfer chain functioning in an early step of cytosolic Fe-S biogenesis, facilitating the de novo assembly of a [4Fe-4S] cluster on the scaffold complex CFD1-NBP35. Electrons are transferred to DRE2 from NADPH via the FAD- and FMN-containing protein TAH18. TAH18-DRE2 are also required for the assembly of the diferric tyrosyl radical cofactor of ribonucleotide reductase (RNR), probably by providing electrons for reduction during radical cofactor maturation in the catalytic small subunit RNR2. This Cryptococcus neoformans var. neoformans serotype D (strain B-3501A) (Filobasidiella neoformans) protein is Fe-S cluster assembly protein DRE2.